A 121-amino-acid polypeptide reads, in one-letter code: Prefoldin subunit beta (121 aa).

This sequence belongs to the prefoldin subunit beta family. Heterohexamer of two alpha and four beta subunits.

The protein resides in the cytoplasm. Molecular chaperone capable of stabilizing a range of proteins. Seems to fulfill an ATP-independent, HSP70-like function in archaeal de novo protein folding. The chain is Prefoldin subunit beta from Caldivirga maquilingensis (strain ATCC 700844 / DSM 13496 / JCM 10307 / IC-167).